The following is a 304-amino-acid chain: Glutaminase (304 aa).

Ser-63, Asn-114, Glu-158, Asn-165, Tyr-189, Tyr-240, and Val-258 together coordinate substrate.

It belongs to the glutaminase family. Homotetramer.

The enzyme catalyses L-glutamine + H2O = L-glutamate + NH4(+). This is Glutaminase from Shewanella oneidensis (strain ATCC 700550 / JCM 31522 / CIP 106686 / LMG 19005 / NCIMB 14063 / MR-1).